The following is a 122-amino-acid chain: NADH-quinone oxidoreductase subunit A (122 aa).

The next 3 helical transmembrane spans lie at 10 to 30 (MIVL…LTLG), 66 to 86 (IFAL…PWAV), and 91 to 111 (LGLF…VGLA).

It belongs to the complex I subunit 3 family. In terms of assembly, NDH-1 is composed of 14 different subunits. Subunits NuoA, H, J, K, L, M, N constitute the membrane sector of the complex.

It localises to the cell membrane. It carries out the reaction a quinone + NADH + 5 H(+)(in) = a quinol + NAD(+) + 4 H(+)(out). NDH-1 shuttles electrons from NADH, via FMN and iron-sulfur (Fe-S) centers, to quinones in the respiratory chain. The immediate electron acceptor for the enzyme in this species is believed to be a menaquinone. Couples the redox reaction to proton translocation (for every two electrons transferred, four hydrogen ions are translocated across the cytoplasmic membrane), and thus conserves the redox energy in a proton gradient. This Bacillus thuringiensis subsp. konkukian (strain 97-27) protein is NADH-quinone oxidoreductase subunit A.